The sequence spans 219 residues: Salivary IL-4-inducing protein (219 aa).

A signal peptide spans 1 to 19; the sequence is MKYLLTLLMALSLVNLMLT. Residues 19–109 form a disordered region; the sequence is TRPTPEDDGG…KNDPRETYNK (91 aa). Over residues 30–43 the composition is skewed to low complexity; sequence SEEPQTQETTGETT. The segment covering 72-107 has biased composition (basic and acidic residues); the sequence is DDTAKKEDDGESKDGEGSEKSDKEKGEPKNDPRETY.

In terms of tissue distribution, salivary gland (at protein level).

The protein localises to the secreted. Induces expression of IL4 in host skin by diverting host CD4 cells away from Th1 and towards Th2 responsiveness. Induces expression of IL10 in host skin. Down-regulates expression of IL12B, IFN-gamma (IFNG) and TNF-alpha (TNF) in host skin. The sequence is that of Salivary IL-4-inducing protein from Aedes aegypti (Yellowfever mosquito).